The following is a 209-amino-acid chain: Ribosomal RNA large subunit methyltransferase E (209 aa).

S-adenosyl-L-methionine is bound by residues G60, W62, D80, D96, and D121. Catalysis depends on K161, which acts as the Proton acceptor.

It belongs to the class I-like SAM-binding methyltransferase superfamily. RNA methyltransferase RlmE family.

The protein localises to the cytoplasm. The enzyme catalyses uridine(2552) in 23S rRNA + S-adenosyl-L-methionine = 2'-O-methyluridine(2552) in 23S rRNA + S-adenosyl-L-homocysteine + H(+). Functionally, specifically methylates the uridine in position 2552 of 23S rRNA at the 2'-O position of the ribose in the fully assembled 50S ribosomal subunit. In Pseudomonas fluorescens (strain Pf0-1), this protein is Ribosomal RNA large subunit methyltransferase E.